We begin with the raw amino-acid sequence, 430 residues long: Isochorismate synthase MenF (430 aa).

Catalysis depends on K187, which acts as the Proton acceptor. The Proton donor role is filled by E237. Residues E281 and E414 each contribute to the Mg(2+) site.

It belongs to the isochorismate synthase family. Mg(2+) serves as cofactor.

It carries out the reaction chorismate = isochorismate. It functions in the pathway quinol/quinone metabolism; 1,4-dihydroxy-2-naphthoate biosynthesis; 1,4-dihydroxy-2-naphthoate from chorismate: step 1/7. The protein operates within quinol/quinone metabolism; menaquinone biosynthesis. In terms of biological role, catalyzes the conversion of chorismate to isochorismate. The chain is Isochorismate synthase MenF from Haemophilus influenzae (strain ATCC 51907 / DSM 11121 / KW20 / Rd).